We begin with the raw amino-acid sequence, 209 residues long: Lipid A acyltransferase PagP (209 aa).

Residues 1–24 (MHLKRALITLSLITLPIIPFSSYA) form the signal peptide. Active-site residues include His-81, Asp-124, and Ser-125.

This sequence belongs to the lipid A palmitoyltransferase family. As to quaternary structure, homodimer.

The protein resides in the cell outer membrane. It catalyses the reaction a lipid A + a 1,2-diacyl-sn-glycero-3-phosphocholine = a hepta-acyl lipid A + a 2-acyl-sn-glycero-3-phosphocholine. The catalysed reaction is a lipid IVA + a 1,2-diacyl-sn-glycero-3-phosphocholine = a lipid IVB + a 2-acyl-sn-glycero-3-phosphocholine. The enzyme catalyses a lipid IIA + a 1,2-diacyl-sn-glycero-3-phosphocholine = a lipid IIB + a 2-acyl-sn-glycero-3-phosphocholine. Its function is as follows. Transfers a fatty acid residue from the sn-1 position of a phospholipid to the N-linked hydroxyfatty acid chain on the proximal unit of lipid A or its precursors. This is Lipid A acyltransferase PagP from Pectobacterium parmentieri (strain WPP163) (Pectobacterium wasabiae (strain WPP163)).